The following is a 314-amino-acid chain: Transcription factor TCP20 (314 aa).

2 disordered regions span residues 1-91 (MDPK…RGRR) and 295-314 (NHEE…GSGR). Composition is skewed to basic and acidic residues over residues 38–49 (DENRKPTTEIKD) and 77–89 (SNKD…EGRG). The TCP domain occupies 78 to 132 (NKDRHTKVEGRGRRIRMPALCAARIFQLTRELGHKSDGETIQWLLQQAEPSIIAA).

As to quaternary structure, interacts with PURA1. Interacts with SPL.

It is found in the nucleus. Functionally, transcription factor that binds to the site II motif (3'-TGGGCC/T-5') in the promoter of PCNA-2 and to 3'-GCCCG/A-5' elements in the promoters of cyclin CYCB1-1 and ribosomal protein genes. The chain is Transcription factor TCP20 (TCP20) from Arabidopsis thaliana (Mouse-ear cress).